A 748-amino-acid chain; its full sequence is MRRCGRLSGPPSLLLLLLLLSPLLFSGPGAYAARLSVLYSSSDPLTLLDADSVRPTVLGSSSAWAVEFFASWCGHCIAFAPTWKELANDVKDWRPALNLAVLDCAEETNSAVCREFNIAGFPTVRFFQAFTKNGSGATLPGAGANVQTLRMRLIDALESHRDTWPPACPPLEPAKLNDIDGFFTRNKADYLALVFEREDSYLGREVTLDLSQYHAVAVRRVLNTESDLVNKFGVTDFPSCYLLLRNGSVSRVPVLVESRSFYTSYLRGLPGLTRDAPPTTATPVTADKIAPTVWKFADRSKIYMADLESALHYILRVEVGKFSVLEGQRLVALKKFVAVLAKYFPGQPLVQNFLHSINDWLQKQQKKRIPYSFFKAALDSRKEDAVLTEKVNWVGCQGSEPHFRGFPCSLWVLFHFLTVQANRYSEAHPQEPADGQEVLQAMRSYVQFFFGCRDCADHFEQMAAASMHQVRSPSNAILWLWTSHNRVNARLSGALSEDPHFPKVQWPPRELCSACHNELNGQVPLWDLGATLNFLKAHFSPANIVIDSSASRHTGRRGSPEATPELVMDTLKLESRNSVLGHEQAASAESPGATALDVPAEKPEASGPQELYTGLRMGGASPGQGPPERMEDHQRDMQENAPGQQHLSKRDTEALFLPEVNHLQGPLELRRGGRSPKQLAPILEEEPEALAIQGQGQWLQVLGGGISHLDISLCVGLYSVSFMGLLAMYTYFRARLRTPKGHASYPTA.

A signal peptide spans 1–32 (MRRCGRLSGPPSLLLLLLLLSPLLFSGPGAYA). The region spanning 33-159 (ARLSVLYSSS…RMRLIDALES (127 aa)) is the Thioredoxin domain. Active-site nucleophile residues include Cys73 and Cys76. 2 disulfides stabilise this stretch: Cys73-Cys76 and Cys104-Cys113. Residues Asn133 and Asn246 are each glycosylated (N-linked (GlcNAc...) asparagine). Cys396 and Cys408 are oxidised to a cystine. Residues 399–506 (SEPHFRGFPC…EDPHFPKVQW (108 aa)) form the ERV/ALR sulfhydryl oxidase domain. Residues Arg404, Trp411, His415, Asp454, His458, 481-488 (WTSHNRVN), Lys503, and Trp506 each bind FAD. Cys452 and Cys455 form a disulfide bridge. The cysteines at positions 512 and 515 are disulfide-linked. The segment at 581 to 647 (GHEQAASAES…QENAPGQQHL (67 aa)) is disordered. Over residues 628–638 (ERMEDHQRDMQ) the composition is skewed to basic and acidic residues. The chain crosses the membrane as a helical span at residues 711-731 (ISLCVGLYSVSFMGLLAMYTY).

This sequence belongs to the quiescin-sulfhydryl oxidase (QSOX) family. In terms of assembly, monomer. Requires FAD as cofactor. Post-translationally, N-glycosylated. O-glycosylated on Thr and Ser residues. As to expression, detected in skin (at protein level). Expressed in the seminal vesicles and skin.

The protein localises to the golgi apparatus membrane. It localises to the secreted. The enzyme catalyses 2 R'C(R)SH + O2 = R'C(R)S-S(R)CR' + H2O2. Catalyzes the oxidation of sulfhydryl groups in peptide and protein thiols to disulfides with the reduction of oxygen to hydrogen peroxide. Plays a role in disulfide bond formation in a variety of extracellular proteins. In fibroblasts, required for normal incorporation of laminin into the extracellular matrix, and thereby for normal cell-cell adhesion and cell migration. The sequence is that of Sulfhydryl oxidase 1 (Qsox1) from Mus musculus (Mouse).